We begin with the raw amino-acid sequence, 506 residues long: NAD(P)H-quinone oxidoreductase subunit 2 (506 aa).

The next 13 membrane-spanning stretches (helical) occupy residues 14–34, 42–62, 79–99, 108–128, 132–152, 167–187, 206–226, 240–260, 276–296, 302–322, 330–350, 374–394, and 409–429; these read AIIP…VDLA, WAPI…ALQW, LAIS…LISW, PIGE…LLCG, LISV…LSGY, LLVG…LYGL, FITS…IAAV, PTPV…AFAI, LLFT…ALAQ, MLAY…VSGT, VLYL…VILF, LGLS…GFFG, and LLVI…ISVI.

Belongs to the complex I subunit 2 family. As to quaternary structure, NDH-1 can be composed of about 15 different subunits; different subcomplexes with different compositions have been identified which probably have different functions.

Its subcellular location is the cellular thylakoid membrane. It carries out the reaction a plastoquinone + NADH + (n+1) H(+)(in) = a plastoquinol + NAD(+) + n H(+)(out). The catalysed reaction is a plastoquinone + NADPH + (n+1) H(+)(in) = a plastoquinol + NADP(+) + n H(+)(out). Functionally, NDH-1 shuttles electrons from an unknown electron donor, via FMN and iron-sulfur (Fe-S) centers, to quinones in the respiratory and/or the photosynthetic chain. The immediate electron acceptor for the enzyme in this species is believed to be plastoquinone. Couples the redox reaction to proton translocation, and thus conserves the redox energy in a proton gradient. Cyanobacterial NDH-1 also plays a role in inorganic carbon-concentration. This is NAD(P)H-quinone oxidoreductase subunit 2 from Prochlorococcus marinus (strain MIT 9215).